The sequence spans 689 residues: Glycine--tRNA ligase beta subunit (689 aa).

The protein belongs to the class-II aminoacyl-tRNA synthetase family. As to quaternary structure, tetramer of two alpha and two beta subunits.

The protein resides in the cytoplasm. It carries out the reaction tRNA(Gly) + glycine + ATP = glycyl-tRNA(Gly) + AMP + diphosphate. The sequence is that of Glycine--tRNA ligase beta subunit from Aeromonas hydrophila subsp. hydrophila (strain ATCC 7966 / DSM 30187 / BCRC 13018 / CCUG 14551 / JCM 1027 / KCTC 2358 / NCIMB 9240 / NCTC 8049).